Consider the following 463-residue polypeptide: Asparagine--tRNA ligase (463 aa).

Belongs to the class-II aminoacyl-tRNA synthetase family. In terms of assembly, homodimer.

Its subcellular location is the cytoplasm. The enzyme catalyses tRNA(Asn) + L-asparagine + ATP = L-asparaginyl-tRNA(Asn) + AMP + diphosphate + H(+). The sequence is that of Asparagine--tRNA ligase from Bacillus cereus (strain ZK / E33L).